The sequence spans 39 residues: Cytochrome b559 subunit beta (39 aa).

Residues 14–30 (WLAVHGLAVPTVFFLGS) traverse the membrane as a helical segment. Residue histidine 18 coordinates heme.

Belongs to the PsbE/PsbF family. Heterodimer of an alpha subunit and a beta subunit. PSII is composed of 1 copy each of membrane proteins PsbA, PsbB, PsbC, PsbD, PsbE, PsbF, PsbH, PsbI, PsbJ, PsbK, PsbL, PsbM, PsbT, PsbX, PsbY, PsbZ, Psb30/Ycf12, at least 3 peripheral proteins of the oxygen-evolving complex and a large number of cofactors. It forms dimeric complexes. Heme b serves as cofactor.

It localises to the plastid. The protein localises to the chloroplast thylakoid membrane. This b-type cytochrome is tightly associated with the reaction center of photosystem II (PSII). PSII is a light-driven water:plastoquinone oxidoreductase that uses light energy to abstract electrons from H(2)O, generating O(2) and a proton gradient subsequently used for ATP formation. It consists of a core antenna complex that captures photons, and an electron transfer chain that converts photonic excitation into a charge separation. This Gnetum gnemon (Spanish joint-fir) protein is Cytochrome b559 subunit beta.